The chain runs to 110 residues: Inner kinetochore subunit mhf1 (110 aa).

It belongs to the TAF9 family. CENP-S/MHF1 subfamily. The MHF histone-fold complex is a heterotetramer of 2 mhf1-mhf2 heterodimers. Component of the inner kinetochore constitutive centromere-associated network (CCAN) (also known as central kinetochore Sim4 complex in fission yeast), which is composed of at least cnl2, cnp3, cnp20, fta1, fta2, fta3, fta4, fta6, fta7, mal2, mhf1, mhf2, mis6, mis15, mis17, sim4 and wip1.

It localises to the nucleus. In terms of biological role, component of a FANCM-MHF complex that promotes gene conversion at blocked replication forks, probably by reversal of the stalled fork. FANCM-MHF promotes non-crossover recombination. The sequence is that of Inner kinetochore subunit mhf1 from Schizosaccharomyces pombe (strain 972 / ATCC 24843) (Fission yeast).